The following is a 1456-amino-acid chain: Sterol 3-beta-glucosyltransferase (1456 aa).

The segment covering 60 to 70 (ESDEEDGDEVE) has biased composition (acidic residues). 2 disordered regions span residues 60–113 (ESDE…SISH) and 128–156 (LSPH…TQSE). The span at 71–104 (TPSTTTTAVSPSATMSAPSPTATAPTPHSGTHTP) shows a compositional bias: low complexity. Residues 137–146 (SSHEASRRGS) are compositionally biased toward basic and acidic residues. Positions 200–247 (QKLKGFAALDVDEQLIADYPVWLLKNVLIQGHLYITAKHMCFLSYLPR) constitute a GRAM 1 domain. Residues 251–351 (ANIRSGTLVK…WVKALQKEIF (101 aa)) enclose the PH domain. Disordered regions lie at residues 462 to 512 (HSAH…PRLP) and 524 to 776 (DKCD…QDTF). Residues 496 to 508 (QPHERDEKRDSKL) show a composition bias toward basic and acidic residues. A compositionally biased stretch (polar residues) spans 556-567 (LASQRTSSSTLF). Low complexity-rich tracts occupy residues 576–606 (SQPT…PASA) and 647–676 (GGAT…SSPG). The segment covering 677 to 696 (TPGGLGGPGAVGAGGPGVMG) has biased composition (gly residues). The segment covering 719 to 735 (APHDPAAAAAAADAAAP) has biased composition (low complexity). The 67-residue stretch at 827–893 (ERFQKRFALG…KVVENATKDS (67 aa)) folds into the GRAM 2 domain. Residues Ser1004, Arg1005, Asp1007, Asn1279, Asn1307, His1310, His1323, Ser1326, Gly1327, Thr1328, Asp1347, and Gln1348 each contribute to the UDP-alpha-D-glucose site.

This sequence belongs to the glycosyltransferase 28 family.

Its subcellular location is the cytoplasm. It localises to the membrane. It carries out the reaction a sterol + UDP-alpha-D-glucose = a sterol 3-beta-D-glucoside + UDP + H(+). It catalyses the reaction ergosterol + UDP-alpha-D-glucose = ergosteryl 3-beta-D-glucoside + UDP + H(+). Functionally, sterol glycosyltransferase responsible for the glycosylation of ergosterol to form ergosterol-glucoside. The chain is Sterol 3-beta-glucosyltransferase from Yarrowia lipolytica (strain CLIB 122 / E 150) (Yeast).